The primary structure comprises 356 residues: Putative methylthioribose-1-phosphate isomerase (356 aa).

Residues 57 to 59 (RGA), arginine 100, and glutamine 206 contribute to the substrate site. The active-site Proton donor is aspartate 247. 257 to 258 (NK) contacts substrate.

The protein belongs to the eIF-2B alpha/beta/delta subunits family. MtnA subfamily.

The enzyme catalyses 5-(methylsulfanyl)-alpha-D-ribose 1-phosphate = 5-(methylsulfanyl)-D-ribulose 1-phosphate. Catalyzes the interconversion of methylthioribose-1-phosphate (MTR-1-P) into methylthioribulose-1-phosphate (MTRu-1-P). The polypeptide is Putative methylthioribose-1-phosphate isomerase (aIF-2BI) (Pyrococcus abyssi (strain GE5 / Orsay)).